A 148-amino-acid chain; its full sequence is MALEQTLKKDWYSILGADPSANMSDLKQKYQKLILLYHPDKQSADVPAGTMEECMQKFIEIDQAWKILGNEETKKKYDLQRHEDELRNVGPVDAQVRLEEMSWNQGDESFFLSCRCGGKYTVSKDEAQEATLISCDACSLIVELLHQS.

In terms of domain architecture, J spans 10–81 (DWYSILGADP…ETKKKYDLQR (72 aa)). The region spanning 92 to 147 (VDAQVRLEEMSWNQGDESFFLSCRCGGKYTVSKDEAQEATLISCDACSLIVELLHQ) is the DPH-type MB domain. Zn(2+) is bound by residues Cys-114, Cys-116, Cys-135, and Cys-138.

Belongs to the DPH4 family. Monomer and homooligomer. Iron binding promotes oligomerization. In terms of tissue distribution, detected in heart, brain, spleen, lung, liver, kidney and testis.

The protein localises to the cytoplasm. The protein resides in the cytoskeleton. It participates in protein modification; peptidyl-diphthamide biosynthesis. In terms of biological role, the iron-bound form is redox-active and can function as electron carrier. Stimulates the ATPase activity of several Hsp70-type chaperones. This ability is enhanced by iron-binding. Plays a role in the diphthamide biosynthesis, a post-translational modification of histidine which occurs in translation elongation factor 2 (EEF2). The chain is DnaJ homolog subfamily C member 24 (Dnajc24) from Mus musculus (Mouse).